A 179-amino-acid polypeptide reads, in one-letter code: Large ribosomal subunit protein uL6 (179 aa).

Belongs to the universal ribosomal protein uL6 family. Part of the 50S ribosomal subunit.

In terms of biological role, this protein binds to the 23S rRNA, and is important in its secondary structure. It is located near the subunit interface in the base of the L7/L12 stalk, and near the tRNA binding site of the peptidyltransferase center. The protein is Large ribosomal subunit protein uL6 of Bacillus anthracis.